Consider the following 435-residue polypeptide: Methylenetetrahydrofolate--tRNA-(uracil-5-)-methyltransferase TrmFO (435 aa).

9–14 is an FAD binding site; sequence GAGLAG.

The protein belongs to the MnmG family. TrmFO subfamily. Requires FAD as cofactor.

It localises to the cytoplasm. It catalyses the reaction uridine(54) in tRNA + (6R)-5,10-methylene-5,6,7,8-tetrahydrofolate + NADH + H(+) = 5-methyluridine(54) in tRNA + (6S)-5,6,7,8-tetrahydrofolate + NAD(+). It carries out the reaction uridine(54) in tRNA + (6R)-5,10-methylene-5,6,7,8-tetrahydrofolate + NADPH + H(+) = 5-methyluridine(54) in tRNA + (6S)-5,6,7,8-tetrahydrofolate + NADP(+). Catalyzes the folate-dependent formation of 5-methyl-uridine at position 54 (M-5-U54) in all tRNAs. In Staphylococcus haemolyticus (strain JCSC1435), this protein is Methylenetetrahydrofolate--tRNA-(uracil-5-)-methyltransferase TrmFO.